Consider the following 605-residue polypeptide: DNA mismatch repair protein MutL (605 aa).

The protein belongs to the DNA mismatch repair MutL/HexB family.

In terms of biological role, this protein is involved in the repair of mismatches in DNA. It is required for dam-dependent methyl-directed DNA mismatch repair. May act as a 'molecular matchmaker', a protein that promotes the formation of a stable complex between two or more DNA-binding proteins in an ATP-dependent manner without itself being part of a final effector complex. In Sinorhizobium medicae (strain WSM419) (Ensifer medicae), this protein is DNA mismatch repair protein MutL.